Here is a 162-residue protein sequence, read N- to C-terminus: Flagellar assembly factor FliW (162 aa).

Belongs to the FliW family. In terms of assembly, interacts with translational regulator CsrA and flagellin(s).

The protein resides in the cytoplasm. Its function is as follows. Acts as an anti-CsrA protein, binds CsrA and prevents it from repressing translation of its target genes, one of which is flagellin. Binds to flagellin and participates in the assembly of the flagellum. The sequence is that of Flagellar assembly factor FliW from Magnetococcus marinus (strain ATCC BAA-1437 / JCM 17883 / MC-1).